A 2108-amino-acid polypeptide reads, in one-letter code: Mucin-5B (2108 aa).

The N-terminal stretch at 1–21 is a signal peptide; it reads MEIKKERSFWIFCLIWSFCKG. The region spanning 36–203 is the VWFD 1 domain; it reads SECTTWGNFH…KVEDPSEKCP (168 aa). 2 disulfides stabilise this stretch: Cys38-Cys166 and Cys60-Cys202. The segment at 196-219 is disordered; it reads EDPSEKCPDVRPDDHTGRHPTEDD. Residues 304–360 form the TIL 1 domain; that stretch reads CPSNMEYMECGNSCADTCADPERSKICKAPCTDGCFCPPGTILDDLGGKKCVPRDSC. An N-linked (GlcNAc...) (complex) asparagine glycan is attached at Asn381. The region spanning 398-570 is the VWFD 2 domain; that stretch reads GSCSIDGGFH…NSWKTRASCF (173 aa). 3 disulfides stabilise this stretch: Cys400–Cys534, Cys422–Cys569, and Cys443–Cys451. N-linked (GlcNAc...) (complex) asparagine glycans are attached at residues Asn528, Asn599, Asn680, and Asn772. In terms of domain architecture, TIL 2 spans 666-723; that stretch reads CPETMVYNYSVKYCNQSCRSLDEPDPLCKVQIAPMEGCGCPEGTYLNDEEECVTPDDC. The TIL 3 domain maps to 782-825; that stretch reads GSECQKSCKTQDMHCYVTECVSGCMCPDGLVLDGSGGCIPKDQC. In terms of domain architecture, VWFC 1 spans 825–897; the sequence is CPCVHGGHFY…DYILAQDFCP (73 aa). A glycan (N-linked (GlcNAc...) (complex) asparagine) is linked at Asn855. One can recognise a VWFD 3 domain in the interval 863–1033; that stretch reads GTCTVYGNGH…NSWKITSTCS (171 aa). Disulfide bonds link Cys865-Cys997, Cys887-Cys1032, Cys896-Cys994, and Cys914-Cys921. N-linked (GlcNAc...) (complex) asparagine glycosylation is found at Asn1036, Asn1219, Asn1371, and Asn1452. Residues 1429–1613 enclose the VWFD 4 domain; that stretch reads CICSGWGNEH…APVSTNRYCN (185 aa). 3 disulfide bridges follow: Cys1431–Cys1573, Cys1453–Cys1612, and Cys1477–Cys1485. N-linked (GlcNAc...) (complex) asparagine glycans are attached at residues Asn1567, Asn1639, Asn1792, Asn1807, and Asn1841. In terms of domain architecture, VWFC 2 spans 1761-1832; sequence CGCTAQDGSV…DPCCTETVCE (72 aa). The 68-residue stretch at 1870 to 1937 folds into the VWFC 3 domain; that stretch reads GVCVSEGVEF…KEGQCCSQCQ (68 aa). The N-linked (GlcNAc...) (complex) asparagine glycan is linked to Asn1964. 4 disulfide bridges follow: Cys2010–Cys2066, Cys2031–Cys2080, Cys2042–Cys2096, and Cys2046–Cys2098. The region spanning 2010 to 2104 is the CTCK domain; it reads CIDLPHKCKR…ECGCVETKCP (95 aa).

As to quaternary structure, homomultimer; disulfide-linked. The N- and C-terminus mediate their assembly into higher order structures to form filaments. The CTCK domains of two polypeptides associate in the endoplasmic reticulum to generate intermolecularly disulfide-bonded dimers. These dimers progress to the Golgi apparatus, which is a more acidic environment than the endoplasmic reticulum. Under acidic conditions, the N-termini form non-covalent intermolecular interactions that juxtapose assemblies from different CTCK-linked dimers to produce long, disulfide-linked polymers that remain highly compact until secretion. N-glycosylated. Complex glycosylation with bisecting N-acetylglucosamine. Contains mainly N-acetylglucosamine (3.1-8.5%), mannose (2.9-4.6%), a small amount of galactose (1.1-4.35) and sialic acid (0.3-1.3%). Most abundant glycan is composed of a GlcNAc(2)Man(3) core, a bisecting GlcNAc and another 3 GlcNAc antannae located on the mannoses of the core. Site Asn-1639 exists both in glycosylated and non-glycosylated forms.

Its subcellular location is the secreted. Functionally, ovomucin, the glycoprotein responsible for the gel properties of egg white, is composed for 2 subunits, alpha-ovomucin/MUC5B and beta-ovomucin/MUC6. The sequence is that of Mucin-5B (MUC5B) from Gallus gallus (Chicken).